The primary structure comprises 434 residues: Nicotinate phosphoribosyltransferase (434 aa).

Position 242 is a phosphohistidine; by autocatalysis (histidine 242).

This sequence belongs to the NAPRTase family. Transiently phosphorylated on a His residue during the reaction cycle. Phosphorylation strongly increases the affinity for substrates and increases the rate of nicotinate D-ribonucleotide production. Dephosphorylation regenerates the low-affinity form of the enzyme, leading to product release.

The enzyme catalyses nicotinate + 5-phospho-alpha-D-ribose 1-diphosphate + ATP + H2O = nicotinate beta-D-ribonucleotide + ADP + phosphate + diphosphate. Its pathway is cofactor biosynthesis; NAD(+) biosynthesis; nicotinate D-ribonucleotide from nicotinate: step 1/1. Functionally, catalyzes the synthesis of beta-nicotinate D-ribonucleotide from nicotinate and 5-phospho-D-ribose 1-phosphate at the expense of ATP. In Chelativorans sp. (strain BNC1), this protein is Nicotinate phosphoribosyltransferase.